A 664-amino-acid polypeptide reads, in one-letter code: Chaperone protein DnaK (664 aa).

Thr201 bears the Phosphothreonine; by autocatalysis mark. Basic and acidic residues predominate over residues 574 to 592; that stretch reads LKEDASTEKIKEASEELSR. Residues 574–664 form a disordered region; the sequence is LKEDASTEKI…DVEIVDKPND (91 aa). The span at 600–617 shows a compositional bias: low complexity; the sequence is AMQSQSASAAPSSAANAQ. Positions 639–649 are enriched in polar residues; it reads GNSTSASSNNE.

Belongs to the heat shock protein 70 family.

Functionally, acts as a chaperone. In Chlamydia felis (strain Fe/C-56) (Chlamydophila felis), this protein is Chaperone protein DnaK.